The following is a 1237-amino-acid chain: MGDMKTPDFDDLLAAFDIPDIDANEAIHSGPEENEGPGGPGKPEPGVGSESEDTAAASAGDGPGVPAQASDHGLPPPDISVVSVIVKNTVCPEQSEALAGGSAGDGAQAAGVTKEGPVGPHRMQNGFGSPEPSLPGTPHSPAPPSGGTWKEKGMEGKTPLDLFAHFGPEPGDHSDPLPPSAPSPTREGALTPPPFPSSFELAQENGPGMQPPVSSPPLGALKQESCSPHHPQVLAQQGSGSSPKATDIPASASPPPVAGVPFFKQSPGHQSPLASPKVPVCQPLKEEDDDEGPVDKSSPGSPQSPSSGAEAADEDSNDSPASSSSRPLKVRIKTIKTSCGNITRTVTQVPSDPDPPAPLAEGAFLAEASLLKLSPATPTSEGPKVVSVQLGDGTRLKGTVLPVATIQNASTAMLMAASVARKAVVLPGGTATSPKMIAKNVLGLVPQALPKADGRAGLGTGGQKVNGASVVMVQPSKTATGPSTGGGTVISRTQSSLVEAFNKILNSKNLLPAYRPNLSPPAEAGLALPPTGYRCLECGDAFSLEKSLARHYDRRSMRIEVTCNHCARRLVFFNKCSLLLHAREHKDKGLVMQCSHLVMRPVALDQMVGQPDITPLLPVAVPPVSGPLALPALGKGEGAITSSAITTVAAEAPVLPLSTEPPAAPATSAYTCFRCLECKEQCRDKAGMAAHFQQLGPPAPGATSNVCPTCPMMLPNRCSFSAHQRMHKNRPPHVCPECGGNFLQANFQTHLREACLHVSRRVGYRCPSCSVVFGGVNSIKSHIQTSHCEVFHKCPICPMAFKSGPSAHAHLYSQHPSFQTQQAKLIYKCAMCDTVFTHKPLLSSHFDQHLLPQRVSVFKCPSCPLLFAQKRTMLEHLKNTHQSGRLEETAGKGAGGALLTPKTEPEELAVSQGGAAPATEESSSSSEEEEVPSSPEPPRPAKRPRRELGSKGLKGGGGGPGGWTCGLCHSWFPERDEYVAHMKKEHGKSVKKFPCRLCERSFCSAPSLRRHVRVNHEGIKRVYPCRYCTEGKRTFSSRLILEKHVQVRHGLQLGAQSPGRGTTLARGSSARAQGPGRKRRQSSDSCSEEPDSTTPPAKSPRGGPGSGGHGPLRYRSSSSTEQSLMMGLRVEDGAQQCLDCGLCFASPGSLSRHRFISHKKRRGVGKASALGLGDGEEEAPPSRSDPDGGDSPLPASGGPLTCKVCGKSCDSPLNLKTHFRTHGMAFIRARQGAVGDN.

Disordered regions lie at residues M1–S80 and E96–V330. The span at A97 to G111 shows a compositional bias: low complexity. S102, S129, and S140 each carry phosphoserine. Residues P132 to P144 show a composition bias toward pro residues. T148 is modified (phosphothreonine). Phosphoserine is present on residues S227, S242, S251, S253, S266, and S271. Over residues L234 to K244 the composition is skewed to polar residues. K285 participates in a covalent cross-link: Glycyl lysine isopeptide (Lys-Gly) (interchain with G-Cter in SUMO2). Positions S297–E310 are enriched in low complexity. Glycyl lysine isopeptide (Lys-Gly) (interchain with G-Cter in SUMO2) cross-links involve residues K336 and K372. Position 374 is a phosphoserine (S374). T377 carries the post-translational modification Phosphothreonine. Glycyl lysine isopeptide (Lys-Gly) (interchain with G-Cter in SUMO2) cross-links involve residues K384, K397, and K422. Residue S433 is modified to Phosphoserine. Residues K435, K439, K451, and K464 each participate in a glycyl lysine isopeptide (Lys-Gly) (interchain with G-Cter in SUMO2) cross-link. Phosphoserine is present on S495. The C2H2-type 1; degenerate zinc-finger motif lies at Y533 to Y552. 5 consecutive C2H2-type zinc fingers follow at residues N705–H727, Y764–H787, H792–H815, Y827–H849, and F858–H881. Over residues T880 to A890 the composition is skewed to basic and acidic residues. Residues T880–G957 are disordered. T900 carries the post-translational modification Phosphothreonine. A compositionally biased stretch (low complexity) spans A915–S925. K954 participates in a covalent cross-link: Glycyl lysine isopeptide (Lys-Gly) (interchain with G-Cter in SUMO2). C2H2-type zinc fingers lie at residues W963–H986 and F993–H1016. K1043 participates in a covalent cross-link: Glycyl lysine isopeptide (Lys-Gly) (interchain with G-Cter in SUMO2). A disordered region spans residues L1051–E1121. S1057 is subject to Phosphoserine. Position 1060 is an omega-N-methylarginine (R1060). 3 positions are modified to phosphoserine: S1082, S1083, and S1085. R1101 is modified (omega-N-methylarginine). A phosphoserine mark is found at S1106 and S1118. A C2H2-type 9 zinc finger spans residues Q1135–H1158. Residues K1159–A1195 form a disordered region. Phosphoserine is present on residues S1184, S1191, and S1211. The C2H2-type 10 zinc-finger motif lies at L1200–H1222.

The protein belongs to the krueppel C2H2-type zinc-finger protein family. As to quaternary structure, interacts with ZMYND8. In terms of tissue distribution, widely expressed with highest levels in obvary, muscle, blood and lung.

It is found in the cytoplasm. Its subcellular location is the nucleus. Functionally, may be involved in transcriptional regulation. The protein is Zinc finger protein 687 (ZNF687) of Homo sapiens (Human).